The primary structure comprises 796 residues: Conidiophore development regulator abaA (796 aa).

The TEA DNA-binding region spans 133-207 (GKDGEPVWSD…QVLDSFLKGD (75 aa)). A disordered region spans residues 215–254 (REQSDRSTAQTQPVGPRWRTSMDHLPSSHYGTHATSSYPE). A compositionally biased stretch (polar residues) spans 243–252 (HYGTHATSSY). A leucine-zipper-like region spans residues 341–362 (LSDVNDPLNCEIILLETNLELM). The interval 612 to 643 (EGLSDKTAPTSVLDPFPNLTQQTTSQTAGINV) is disordered. Residues 629–643 (NLTQQTTSQTAGINV) are compositionally biased toward polar residues.

The protein belongs to the TEC1 family.

The protein resides in the nucleus. In terms of biological role, brlA, abaA and wetA are pivotal regulators of conidiophore development and conidium maturation. They act individually and together to regulate their own expression and that of numerous other sporulation-specific gene. Controls temporal and spatial specificity in Aspergillus development. Directs the differentiation of phialides and is continuously required for maintenance of their function. Expression of abaA leads to activation of brlA and wetA, cessation of vegetative growth, and accentuated cellular vacuolization. Binds to the sequence 5'-CATTCY-3', where Y is a pyrimidine, making both major- and minor-groove contacts. Multiple abaA binding sites are present in the cis-acting regulatory regions of several developmentally controlled structural genes as well as those of the upstream regulatory gene brlA, the downstream regulatory gene wetA, and abaA itself. This Emericella nidulans (strain FGSC A4 / ATCC 38163 / CBS 112.46 / NRRL 194 / M139) (Aspergillus nidulans) protein is Conidiophore development regulator abaA.